A 110-amino-acid chain; its full sequence is Ribonuclease P protein component 1 (110 aa).

This sequence belongs to the eukaryotic/archaeal RNase P protein component 1 family. Consists of a catalytic RNA component and at least 4-5 protein subunits.

The protein resides in the cytoplasm. The catalysed reaction is Endonucleolytic cleavage of RNA, removing 5'-extranucleotides from tRNA precursor.. Part of ribonuclease P, a protein complex that generates mature tRNA molecules by cleaving their 5'-ends. This is Ribonuclease P protein component 1 from Methanosarcina mazei (strain ATCC BAA-159 / DSM 3647 / Goe1 / Go1 / JCM 11833 / OCM 88) (Methanosarcina frisia).